The chain runs to 878 residues: Glycogen [starch] synthase (878 aa).

A UDP-alpha-D-glucose-binding site is contributed by Lys61. 2 disordered regions span residues 637 to 721 (PPKP…NVIP) and 746 to 878 (NEFK…KSLK). 2 stretches are compositionally biased toward low complexity: residues 641 to 656 (ISRS…LKLS) and 666 to 676 (QQQQQQQQPQP). Residues 677–692 (IGTTINLIPPSSNVSV) show a composition bias toward polar residues. Composition is skewed to low complexity over residues 693-715 (TPTT…ITTP), 746-781 (NEFK…AAAT), 795-830 (PNTS…NGKP), and 838-878 (TKSN…KSLK).

This sequence belongs to the glycosyltransferase 3 family.

It catalyses the reaction [(1-&gt;4)-alpha-D-glucosyl](n) + UDP-alpha-D-glucose = [(1-&gt;4)-alpha-D-glucosyl](n+1) + UDP + H(+). It functions in the pathway glycan biosynthesis; glycogen biosynthesis. Functionally, catalyzes the formation of apha-1,4 glycosidic bonds adding glucose residue from UDPG to the growing chain of glycogen. The protein is Glycogen [starch] synthase (glcS) of Dictyostelium discoideum (Social amoeba).